We begin with the raw amino-acid sequence, 567 residues long: Urease subunit alpha (567 aa).

Positions 129-567 (GGVDTHIHWI…LPMAQRYFLF (439 aa)) constitute a Urease domain. Positions 134, 136, and 217 each coordinate Ni(2+). Residue Lys217 is modified to N6-carboxylysine. His219 contributes to the substrate binding site. Ni(2+) is bound by residues His246 and His272. Residue His320 is the Proton donor of the active site. Residue Asp360 participates in Ni(2+) binding.

The protein belongs to the metallo-dependent hydrolases superfamily. Urease alpha subunit family. In terms of assembly, heterotrimer of UreA (gamma), UreB (beta) and UreC (alpha) subunits. Three heterotrimers associate to form the active enzyme. Requires Ni cation as cofactor. Post-translationally, carboxylation allows a single lysine to coordinate two nickel ions.

The protein localises to the cytoplasm. The catalysed reaction is urea + 2 H2O + H(+) = hydrogencarbonate + 2 NH4(+). It participates in nitrogen metabolism; urea degradation; CO(2) and NH(3) from urea (urease route): step 1/1. The chain is Urease subunit alpha from Citrobacter koseri (strain ATCC BAA-895 / CDC 4225-83 / SGSC4696).